Consider the following 199-residue polypeptide: Prolactin-2 (199 aa).

Intrachain disulfides connect cysteine 4–cysteine 11, cysteine 58–cysteine 174, and cysteine 191–cysteine 199.

Belongs to the somatotropin/prolactin family.

It is found in the secreted. The protein is Prolactin-2 of Alligator mississippiensis (American alligator).